A 94-amino-acid chain; its full sequence is Small ribosomal subunit protein bS20 (94 aa).

Belongs to the bacterial ribosomal protein bS20 family.

Its function is as follows. Binds directly to 16S ribosomal RNA. In Symbiobacterium thermophilum (strain DSM 24528 / JCM 14929 / IAM 14863 / T), this protein is Small ribosomal subunit protein bS20.